We begin with the raw amino-acid sequence, 84 residues long: U4-theraphotoxin-Hhn1b (84 aa).

The N-terminal stretch at 1 to 22 (MKVTLTAILTCAAVLVLHTTAA) is a signal peptide. A propeptide spanning residues 23-47 (EELEESQLMEVGMPDTELAAVDEER) is cleaved from the precursor. Disulfide bonds link C51–C65, C55–C76, and C70–C81.

It belongs to the neurotoxin 12 (Hwtx-2) family. 02 (Hwtx-2) subfamily. As to expression, expressed by the venom gland.

It localises to the secreted. Functionally, postsynaptic neurotoxin. This chain is U4-theraphotoxin-Hhn1b, found in Cyriopagopus hainanus (Chinese bird spider).